Here is a 265-residue protein sequence, read N- to C-terminus: MNQNGDKNEGKLFQLPSLPPWKTPRFNKANFNNFTTPLRKRSTRVINDDSMPITGEVLEERTADDLYGINMDVDEVDYLNTLSHIEEEKQYDYSPFCERNTLRESRIDSFLKAERAAHCLVFHKVGHLDGIDSYRPDIDIMCGEEANKYDSANPEGNGSMLLESVPGCNKEDLERLSRREFVTNSKPNMRRLDDIINHETNALKSFWNDSGLVNSLQSHHLHEEYLLLQEELKNVYKIKCHDRVPIESLRDKCRRHYSNEDSSFL.

In terms of assembly, the APC/C is composed of at least 13 subunits that stay tightly associated throughout the cell cycle: APC1, APC2, APC4, APC5, APC9, APC11, CDC16, CDC23, CDC26, CDC27, DOC1, MND2 and SWM1.

It localises to the cytoplasm. The protein resides in the nucleus. Its pathway is protein modification; protein ubiquitination. In terms of biological role, component of the anaphase promoting complex/cyclosome (APC/C), a cell cycle-regulated E3 ubiquitin-protein ligase complex that controls progression through mitosis and the G1 phase of the cell cycle. The APC/C is thought to confer substrate specificity and, in the presence of ubiquitin-conjugating E2 enzymes, it catalyzes the formation of protein-ubiquitin conjugates that are subsequently degraded by the 26S proteasome. In early mitosis, the APC/C is activated by CDC20 and targets securin PDS1, the B-type cyclin CLB5, and other anaphase inhibitory proteins for proteolysis, thereby triggering the separation of sister chromatids at the metaphase-to-anaphase transition. In late mitosis and in G1, degradation of CLB5 allows activation of the APC/C by CDH1, which is needed to destroy CDC20 and the B-type cyclin CLB2 to allow exit from mitosis and creating the low CDK state necessary for cytokinesis and for reforming prereplicative complexes in G1 prior to another round of replication. This Saccharomyces cerevisiae (strain ATCC 204508 / S288c) (Baker's yeast) protein is Anaphase-promoting complex subunit 9 (APC9).